Here is a 370-residue protein sequence, read N- to C-terminus: GTPase Obg (370 aa).

Residues 1 to 159 enclose the Obg domain; sequence MKFIDEARIE…RMLKLELKVL (159 aa). Positions 128–147 are disordered; that stretch reads LHFKSSTNRAPRQKTDGKPG. Residues 160–334 form the OBG-type G domain; that stretch reads ADVGLLGMPN…LCYAIYDYLS (175 aa). GTP contacts are provided by residues 166-173, 191-195, 213-216, 284-287, and 315-317; these read GMPNAGKS, FTTLA, DIPG, NKLD, and SAL. Mg(2+) contacts are provided by Ser-173 and Thr-193.

Belongs to the TRAFAC class OBG-HflX-like GTPase superfamily. OBG GTPase family. In terms of assembly, monomer. Mg(2+) is required as a cofactor.

The protein resides in the cytoplasm. Its function is as follows. An essential GTPase which binds GTP, GDP and possibly (p)ppGpp with moderate affinity, with high nucleotide exchange rates and a fairly low GTP hydrolysis rate. Plays a role in control of the cell cycle, stress response, ribosome biogenesis and in those bacteria that undergo differentiation, in morphogenesis control. This chain is GTPase Obg, found in Burkholderia cenocepacia (strain ATCC BAA-245 / DSM 16553 / LMG 16656 / NCTC 13227 / J2315 / CF5610) (Burkholderia cepacia (strain J2315)).